The sequence spans 75 residues: MARFFRRRKFCRFTAEGVQEIDYKDVATLKNYITEAGKIVPSRITGTSAKYQRQLARAIKRARYLALLPYTDKHQ.

Belongs to the bacterial ribosomal protein bS18 family. In terms of assembly, part of the 30S ribosomal subunit. Forms a tight heterodimer with protein bS6.

Functionally, binds as a heterodimer with protein bS6 to the central domain of the 16S rRNA, where it helps stabilize the platform of the 30S subunit. This is Small ribosomal subunit protein bS18 from Vibrio cholerae serotype O1 (strain ATCC 39541 / Classical Ogawa 395 / O395).